The primary structure comprises 90 residues: Large ribosomal subunit protein uL23c (90 aa).

It belongs to the universal ribosomal protein uL23 family. As to quaternary structure, part of the 50S ribosomal subunit.

Its subcellular location is the plastid. The protein localises to the chloroplast. Binds to 23S rRNA. The sequence is that of Large ribosomal subunit protein uL23c (rpl23) from Tetradesmus obliquus (Green alga).